The primary structure comprises 160 residues: Cytochrome b6-f complex subunit 4 (160 aa).

3 consecutive transmembrane segments (helical) span residues 36–56 (LLYV…GLSV), 95–115 (LLGV…PFIE), and 131–151 (LTFI…CVPI).

Belongs to the cytochrome b family. PetD subfamily. The 4 large subunits of the cytochrome b6-f complex are cytochrome b6, subunit IV (17 kDa polypeptide, petD), cytochrome f and the Rieske protein, while the 4 small subunits are petG, petL, petM and petN. The complex functions as a dimer.

It localises to the plastid. Its subcellular location is the chloroplast thylakoid membrane. Functionally, component of the cytochrome b6-f complex, which mediates electron transfer between photosystem II (PSII) and photosystem I (PSI), cyclic electron flow around PSI, and state transitions. The sequence is that of Cytochrome b6-f complex subunit 4 from Phaeodactylum tricornutum (strain CCAP 1055/1).